We begin with the raw amino-acid sequence, 427 residues long: Serine--tRNA ligase 2 (427 aa).

Positions 35–53 are enriched in basic and acidic residues; sequence RRRSEAQAEVTRLRTELNR. Residues 35–72 are disordered; that stretch reads RRRSEAQAEVTRLRTELNRTSRARGRSGPPSEEEKEAA. 230 to 232 contributes to the L-serine binding site; it reads TAE. 261–263 lines the ATP pocket; the sequence is RAE. L-serine is bound at residue Glu284. 348–351 contacts ATP; it reads EISS. Residue Ser383 participates in L-serine binding.

Belongs to the class-II aminoacyl-tRNA synthetase family. Type-1 seryl-tRNA synthetase subfamily. Homodimer. The tRNA molecule binds across the dimer.

The protein localises to the cytoplasm. The enzyme catalyses tRNA(Ser) + L-serine + ATP = L-seryl-tRNA(Ser) + AMP + diphosphate + H(+). It catalyses the reaction tRNA(Sec) + L-serine + ATP = L-seryl-tRNA(Sec) + AMP + diphosphate + H(+). It functions in the pathway aminoacyl-tRNA biosynthesis; selenocysteinyl-tRNA(Sec) biosynthesis; L-seryl-tRNA(Sec) from L-serine and tRNA(Sec): step 1/1. In terms of biological role, catalyzes the attachment of serine to tRNA(Ser). Is also able to aminoacylate tRNA(Sec) with serine, to form the misacylated tRNA L-seryl-tRNA(Sec), which will be further converted into selenocysteinyl-tRNA(Sec). This chain is Serine--tRNA ligase 2, found in Streptomyces avermitilis (strain ATCC 31267 / DSM 46492 / JCM 5070 / NBRC 14893 / NCIMB 12804 / NRRL 8165 / MA-4680).